The sequence spans 155 residues: MVLSGALCFRMKDSALKVLYLHNNQLLAGGLHAGKVIKGEEISVVPNRWLDASLSPVILGVQGGSQCLSCGVGQEPTLTLEPVNIMELYLGAKESKSFTFYRRDMGLTSSFESAAYPGWFLCTVPEADQPVRLTQLPENGGWNAPITDFYFQQCD.

Cys-8 and Cys-154 are oxidised to a cystine.

Belongs to the IL-1 family. In terms of assembly, interacts with cargo receptor TMED10; the interaction mediates the translocation from the cytoplasm into the ERGIC (endoplasmic reticulum-Golgi intermediate compartment) and thereby secretion. In terms of tissue distribution, predominantly expressed in skin keratinocytes but not in fibroblasts, endothelial cells or melanocytes. Detected also in the spleen, brain leukocyte and macrophage cell types. Increased in lesional psoriasis skin.

It localises to the cytoplasm. It is found in the secreted. Inhibits the activity of interleukin-36 (IL36A,IL36B and IL36G) by binding to receptor IL1RL2 and preventing its association with the coreceptor IL1RAP for signaling. Part of the IL-36 signaling system that is thought to be present in epithelial barriers and to take part in local inflammatory response; similar to the IL-1 system with which it shares the coreceptor. Proposed to play a role in skin inflammation. May be involved in the innate immune response to fungal pathogens, such as Aspergillus fumigatus. May activate an anti-inflammatory signaling pathway by recruiting SIGIRR. The protein is Interleukin-36 receptor antagonist protein of Homo sapiens (Human).